Consider the following 295-residue polypeptide: Bifunctional protein FolD (295 aa).

Residues 166-168 (GRS), S191, and I232 each bind NADP(+).

The protein belongs to the tetrahydrofolate dehydrogenase/cyclohydrolase family. As to quaternary structure, homodimer.

The catalysed reaction is (6R)-5,10-methylene-5,6,7,8-tetrahydrofolate + NADP(+) = (6R)-5,10-methenyltetrahydrofolate + NADPH. It catalyses the reaction (6R)-5,10-methenyltetrahydrofolate + H2O = (6R)-10-formyltetrahydrofolate + H(+). Its pathway is one-carbon metabolism; tetrahydrofolate interconversion. Its function is as follows. Catalyzes the oxidation of 5,10-methylenetetrahydrofolate to 5,10-methenyltetrahydrofolate and then the hydrolysis of 5,10-methenyltetrahydrofolate to 10-formyltetrahydrofolate. In Wolbachia pipientis subsp. Culex pipiens (strain wPip), this protein is Bifunctional protein FolD.